The chain runs to 341 residues: Dehydration-responsive element-binding protein 2C (341 aa).

The Nuclear localization signal signature appears at 8-48; sequence RKRKSRGTRDVAEILRQWREYNEQIEAESCIDGGGPKSIRK. The segment at 36 to 63 is disordered; that stretch reads SCIDGGGPKSIRKPPPKGSRKGCMKGKG. The span at 45 to 59 shows a compositional bias: basic residues; that stretch reads SIRKPPPKGSRKGCM. The AP2/ERF DNA-binding region spans 71–128; the sequence is DYRGVRQRRWGKWVAEIREPDGGARLWLGTFSSSYEAALAYDEAAKAIYGQSARLNLP.

It belongs to the AP2/ERF transcription factor family. ERF subfamily.

The protein localises to the nucleus. Its function is as follows. Transcriptional activator that binds specifically to the DNA sequence 5'-[AG]CCGAC-3'. Binding to the C-repeat/DRE element mediates high salinity- and abscisic acid-inducible transcription. In Arabidopsis thaliana (Mouse-ear cress), this protein is Dehydration-responsive element-binding protein 2C (DREB2C).